Reading from the N-terminus, the 461-residue chain is WTLSLLLGAVVGNEVCYERLGCFSDDSPWAGIVERPLKILPWSPEKVNTRFLLYTNENPDNFQEIVADPSTIQSSNFNTGRKTRFIIHGFIDKGEESWLSTMCQNMFKVESVNCICVDWKSGSRTAYSQASQNVRIVGAEVAYLVGVLQSSFDYSPSNVHIIGHSLGSHAAGEAGRRTNGAVGRITGLDPAEPCFQGTPELVRLDPSDAQFVDVIHTDIAPFIPNLGFGMSQTAGHLDFFPNGGKEMPGCQKNVLSQIVDIDGIWQGTRDFAACNHLRSYKYYTDSILNPDGFAGFSCASYSDFTANKCFPCSSEGCPQMGHYADRFPGRTKGVGQLFYLNTGDASNFARWRYRVDVTLSGKKVTGHVLVSLFGNKGNSRQYEIFQGTLKPDNTYSNEFDSDVEVGDLEKVKFIWYNNVINLTLPKVGASKITVERNDGSVFNFCSEETVREDVLLTLTAC.

Positions 1–12 are cleaved as a signal peptide; sequence WTLSLLLGAVVG. Cystine bridges form between cysteine 16-cysteine 22 and cysteine 103-cysteine 114. The active-site Nucleophile is serine 165. Aspartate 189 (charge relay system) is an active-site residue. Residues glutamate 200, arginine 203, aspartate 205, and aspartate 208 each contribute to the Ca(2+) site. An intrachain disulfide couples cysteine 250 to cysteine 274. Histidine 276 acts as the Charge relay system in catalysis. 3 disulfides stabilise this stretch: cysteine 298–cysteine 309, cysteine 312–cysteine 317, and cysteine 445–cysteine 461. The 111-residue stretch at 351–461 folds into the PLAT domain; sequence WRYRVDVTLS…EDVLLTLTAC (111 aa).

It belongs to the AB hydrolase superfamily. Lipase family. Forms a 1:1 stoichiometric complex with (pro)colipase/CLPS.

It localises to the secreted. The catalysed reaction is a triacylglycerol + H2O = a diacylglycerol + a fatty acid + H(+). The enzyme catalyses 1,2,3-tributanoylglycerol + H2O = dibutanoylglycerol + butanoate + H(+). It carries out the reaction 1,2,3-tri-(9Z-octadecenoyl)-glycerol + H2O = di-(9Z)-octadecenoylglycerol + (9Z)-octadecenoate + H(+). It catalyses the reaction all-trans-retinyl hexadecanoate + H2O = all-trans-retinol + hexadecanoate + H(+). The catalysed reaction is 1,2-di-(9Z-octadecenoyl)-glycerol + H2O = (9Z-octadecenoyl)-glycerol + (9Z)-octadecenoate + H(+). Inhibited by bile salts, is reactivated by (pro)colipase/CLPS. Its function is as follows. Plays an important role in fat metabolism. It preferentially splits the esters of long-chain fatty acids at positions 1 and 3, producing mainly 2-monoacylglycerol and free fatty acids, and shows considerably higher activity against insoluble emulsified substrates than against soluble ones. This Equus caballus (Horse) protein is Pancreatic triacylglycerol lipase (PNLIP).